We begin with the raw amino-acid sequence, 202 residues long: Transmembrane 4 L6 family member 4 (202 aa).

The Cytoplasmic portion of the chain corresponds to 1 to 9 (MCTGGCARC). A helical membrane pass occupies residues 10–30 (LGGTLIPLAFFGFLANILLFF). The Extracellular portion of the chain corresponds to 31–45 (PGGKVIDDNDHLSQE). A helical membrane pass occupies residues 46–66 (IWFFGGILGSGVLMIFPALVF). At 67-93 (LGLKNNDCCGCCGNEGCGKRFAMFTST) the chain is on the cytoplasmic side. The chain crosses the membrane as a helical span at residues 94-114 (IFAVVGFLGAGYSFIISAISI). Residues 115–158 (NKGPKCLMANSTWGYPFHDGDYLNDEALWNKCREPLNVVPWNLT) lie on the Extracellular side of the membrane. 2 N-linked (GlcNAc...) asparagine glycosylation sites follow: Asn124 and Asn156. Residues 159 to 179 (LFSILLVVGGIQMVLCAIQVV) form a helical membrane-spanning segment. The Cytoplasmic portion of the chain corresponds to 180-202 (NGLLGTLCGDCQCCGCCGGDGPV).

It belongs to the L6 tetraspanin family. N-glycosylated. Glycosylation is required for the growth inhibitory effect. In terms of tissue distribution, jejunum and liver.

The protein localises to the membrane. Regulates the adhesive and proliferative status of intestinal epithelial cells. Can mediate density-dependent cell proliferation. This is Transmembrane 4 L6 family member 4 (TM4SF4) from Homo sapiens (Human).